Here is a 215-residue protein sequence, read N- to C-terminus: Cytochrome b6 (215 aa).

The helical transmembrane segment at 32-52 (VFYCFGGMTLTCFLVQLATGF) threads the bilayer. Cys35 provides a ligand contact to heme c. The heme b site is built by His86 and His100. Helical transmembrane passes span 90 to 110 (ASMMVLMMILHIFRVYLTGGF), 116 to 136 (LTWITGVILAVLTVSFGVTGY), and 186 to 206 (LHTLFLPALSVIFLLAHFLMI). 2 residues coordinate heme b: His187 and His202.

Belongs to the cytochrome b family. PetB subfamily. The 4 large subunits of the cytochrome b6-f complex are cytochrome b6, subunit IV (17 kDa polypeptide, PetD), cytochrome f and the Rieske protein, while the 4 small subunits are PetG, PetL, PetM and PetN. The complex functions as a dimer. Heme b serves as cofactor. It depends on heme c as a cofactor.

The protein resides in the plastid. Its subcellular location is the chloroplast thylakoid membrane. In terms of biological role, component of the cytochrome b6-f complex, which mediates electron transfer between photosystem II (PSII) and photosystem I (PSI), cyclic electron flow around PSI, and state transitions. The protein is Cytochrome b6 of Cyanidium caldarium (Red alga).